Here is a 355-residue protein sequence, read N- to C-terminus: UDP-N-acetylglucosamine--N-acetylmuramyl-(pentapeptide) pyrophosphoryl-undecaprenol N-acetylglucosamine transferase (355 aa).

Residues 15 to 17 (TGG), Asn-127, Arg-163, Ser-191, Ile-244, 263 to 268 (ALTVSE), and Gln-288 each bind UDP-N-acetyl-alpha-D-glucosamine.

The protein belongs to the glycosyltransferase 28 family. MurG subfamily.

It localises to the cell inner membrane. The catalysed reaction is di-trans,octa-cis-undecaprenyl diphospho-N-acetyl-alpha-D-muramoyl-L-alanyl-D-glutamyl-meso-2,6-diaminopimeloyl-D-alanyl-D-alanine + UDP-N-acetyl-alpha-D-glucosamine = di-trans,octa-cis-undecaprenyl diphospho-[N-acetyl-alpha-D-glucosaminyl-(1-&gt;4)]-N-acetyl-alpha-D-muramoyl-L-alanyl-D-glutamyl-meso-2,6-diaminopimeloyl-D-alanyl-D-alanine + UDP + H(+). Its pathway is cell wall biogenesis; peptidoglycan biosynthesis. In terms of biological role, cell wall formation. Catalyzes the transfer of a GlcNAc subunit on undecaprenyl-pyrophosphoryl-MurNAc-pentapeptide (lipid intermediate I) to form undecaprenyl-pyrophosphoryl-MurNAc-(pentapeptide)GlcNAc (lipid intermediate II). The polypeptide is UDP-N-acetylglucosamine--N-acetylmuramyl-(pentapeptide) pyrophosphoryl-undecaprenol N-acetylglucosamine transferase (Salmonella typhi).